Here is a 296-residue protein sequence, read N- to C-terminus: Low affinity immunoglobulin gamma Fc region receptor II (296 aa).

Positions 1–42 (MGIPSFLAFPAARRNRAHCTPWHPWGHMLLWTALLFLAPVSG) are cleaved as a signal peptide. The Extracellular portion of the chain corresponds to 43-225 (KPDLPKAVVT…SSSSGPSSMT (183 aa)). 2 Ig-like C2-type domains span residues 47 to 129 (PKAV…DVIS) and 130 to 212 (DWLL…VNIT). Cystine bridges form between C70–C112 and C151–C195. N79, N86, N105, N179, N186, and N210 each carry an N-linked (GlcNAc...) asparagine glycan. Residues 226–246 (AVAIGTCFAAVAIVAAIITWF) form a helical membrane-spanning segment. The Cytoplasmic portion of the chain corresponds to 247–296 (RLRRKPISAGLTDAENDAARTEAENTVTYSLLSHPDVAEEDSESDYQKRL). The ITIM motif signature appears at 273–278 (VTYSLL). The residue at position 275 (Y275) is a Phosphotyrosine; by SRC-type Tyr-kinases. The residue at position 288 (S288) is a Phosphoserine. At Y292 the chain carries Phosphotyrosine.

In terms of assembly, interacts with FGR and LYN. Post-translationally, phosphorylated by SRC-type Tyr-kinases such as LYN, BLK, FYN and SYK. As to expression, higher expression is found in macrophages than in neutrophils.

It is found in the cell membrane. Its function is as follows. Binds to the Fc region of immunoglobulins gamma. Low affinity receptor. The sequence is that of Low affinity immunoglobulin gamma Fc region receptor II (FCGR2) from Bos taurus (Bovine).